The chain runs to 299 residues: B3 domain-containing transcription factor NGA2 (299 aa).

The segment at 1-21 (MNQEDKEKPIEEASSSMEREH) is disordered. The segment at residues 23–129 (FDKVVTPSDV…KLYIDWRRRP (107 aa)) is a DNA-binding region (TF-B3). A disordered region spans residues 226-249 (GGGGSVNSTEEESSSSGGSIPRGR).

It is found in the nucleus. Its function is as follows. Regulates lateral organ growth. Functionally redundant with NGA1, NGA3 and NGA4. The chain is B3 domain-containing transcription factor NGA2 (NGA2) from Arabidopsis thaliana (Mouse-ear cress).